A 316-amino-acid chain; its full sequence is MAVFDPDLQPSSDRGHLLTEQSNQRSSHLDQLDTLALLELFADEDRRPQEAVAAVAPALAQAVDAVANRLRAGGRLFYLGAGTSGRLGVLDAAECPPTFCSDPQQVQGVLAGGSAALLRSSEGLEDIEAAGRADLEERGFSTKDCLVGIAAGGTTPYVRGGLAFAKSIGALAIALACVPTEQAPLPCDIDIRLLTGPELLTGSTRMKAGTATKLALNTLSTAVMVKLGKVYGNRMVDVAASNSKLVDRSLRILRDLAGVERERGLTLLEEAGGSVKLALLMAAAGLSVDQAKAHLQQYDQQLRPALAAYGAQLAEA.

Residues 1–25 form a disordered region; that stretch reads MAVFDPDLQPSSDRGHLLTEQSNQR. The region spanning 66-229 is the SIS domain; it reads VANRLRAGGR…STAVMVKLGK (164 aa). Residue Glu-94 is the Proton donor of the active site. Glu-125 is a catalytic residue.

This sequence belongs to the GCKR-like family. MurNAc-6-P etherase subfamily. As to quaternary structure, homodimer.

The enzyme catalyses N-acetyl-D-muramate 6-phosphate + H2O = N-acetyl-D-glucosamine 6-phosphate + (R)-lactate. Its pathway is amino-sugar metabolism; N-acetylmuramate degradation. Functionally, specifically catalyzes the cleavage of the D-lactyl ether substituent of MurNAc 6-phosphate, producing GlcNAc 6-phosphate and D-lactate. This Synechococcus sp. (strain CC9605) protein is N-acetylmuramic acid 6-phosphate etherase.